We begin with the raw amino-acid sequence, 115 residues long: Somatostatin-2 (115 aa).

A signal peptide spans 1–18; it reads MKVCRIHCALALLGLALA. The propeptide occupies 19–87; sequence ICSQGAASQP…KEDLRVELER (69 aa). Cysteines 104 and 115 form a disulfide.

It belongs to the somatostatin family.

It is found in the secreted. Its function is as follows. Somatostatin inhibits the release of somatotropin. The polypeptide is Somatostatin-2 (sst2) (Oncorhynchus mykiss (Rainbow trout)).